The sequence spans 1025 residues: Probable outer membrane protein PmpF (1025 aa).

The signal sequence occupies residues 1–20 (MTRRILPLSLVFIPLSCISA). The interval 654–681 (NSTETQTANNSIQEQKNTSETFDSNSTT) is disordered. The segment covering 659–681 (QTANNSIQEQKNTSETFDSNSTT) has biased composition (polar residues). Residues 748-1025 (LLPDDSWFAL…YMNAGGALVF (278 aa)) enclose the Autotransporter domain.

Belongs to the PMP outer membrane protein family.

The protein resides in the secreted. Its subcellular location is the cell wall. It is found in the cell outer membrane. This is Probable outer membrane protein PmpF (pmpF) from Chlamydia muridarum (strain MoPn / Nigg).